Reading from the N-terminus, the 251-residue chain is Imidazole glycerol phosphate synthase subunit HisF (251 aa).

Active-site residues include D12 and D131.

Belongs to the HisA/HisF family. In terms of assembly, heterodimer of HisH and HisF.

The protein resides in the cytoplasm. It catalyses the reaction 5-[(5-phospho-1-deoxy-D-ribulos-1-ylimino)methylamino]-1-(5-phospho-beta-D-ribosyl)imidazole-4-carboxamide + L-glutamine = D-erythro-1-(imidazol-4-yl)glycerol 3-phosphate + 5-amino-1-(5-phospho-beta-D-ribosyl)imidazole-4-carboxamide + L-glutamate + H(+). Its pathway is amino-acid biosynthesis; L-histidine biosynthesis; L-histidine from 5-phospho-alpha-D-ribose 1-diphosphate: step 5/9. IGPS catalyzes the conversion of PRFAR and glutamine to IGP, AICAR and glutamate. The HisF subunit catalyzes the cyclization activity that produces IGP and AICAR from PRFAR using the ammonia provided by the HisH subunit. The protein is Imidazole glycerol phosphate synthase subunit HisF of Helicobacter hepaticus (strain ATCC 51449 / 3B1).